The following is a 347-amino-acid chain: Transcription termination/antitermination protein NusA (347 aa).

The 73-residue stretch at Gly-112–Thr-184 folds into the S1 motif domain. One can recognise a KH domain in the interval Ala-287–Arg-347. The disordered stretch occupies residues Asp-322–Arg-347.

Belongs to the NusA family. In terms of assembly, monomer. Binds directly to the core enzyme of the DNA-dependent RNA polymerase and to nascent RNA.

It is found in the cytoplasm. Its function is as follows. Participates in both transcription termination and antitermination. The protein is Transcription termination/antitermination protein NusA of Mycobacterium bovis (strain ATCC BAA-935 / AF2122/97).